The chain runs to 375 residues: Chaperone protein DnaJ (375 aa).

The 66-residue stretch at 5–70 folds into the J domain; it reads DYYEILGVSK…QKRAAYDQYG (66 aa). The segment at 130–208 adopts a CR-type zinc-finger fold; the sequence is GVTKEIRIPT…CHGHGRVEKS (79 aa). Zn(2+)-binding residues include cysteine 143, cysteine 146, cysteine 160, cysteine 163, cysteine 182, cysteine 185, cysteine 196, and cysteine 199. CXXCXGXG motif repeat units lie at residues 143-150, 160-167, 182-189, and 196-203; these read CDVCHGSG, CPTCHGSG, CPHCQGRG, and CHKCHGHG.

Belongs to the DnaJ family. In terms of assembly, homodimer. Zn(2+) is required as a cofactor.

It localises to the cytoplasm. Its function is as follows. Participates actively in the response to hyperosmotic and heat shock by preventing the aggregation of stress-denatured proteins and by disaggregating proteins, also in an autonomous, DnaK-independent fashion. Unfolded proteins bind initially to DnaJ; upon interaction with the DnaJ-bound protein, DnaK hydrolyzes its bound ATP, resulting in the formation of a stable complex. GrpE releases ADP from DnaK; ATP binding to DnaK triggers the release of the substrate protein, thus completing the reaction cycle. Several rounds of ATP-dependent interactions between DnaJ, DnaK and GrpE are required for fully efficient folding. Also involved, together with DnaK and GrpE, in the DNA replication of plasmids through activation of initiation proteins. This chain is Chaperone protein DnaJ, found in Salmonella paratyphi A (strain ATCC 9150 / SARB42).